A 256-amino-acid chain; its full sequence is Chloroplastic group IIB intron splicing facilitator CRS2, chloroplastic (256 aa).

The transit peptide at Met1–Val45 directs the protein to the chloroplast. Tyr74 is a tRNA binding site. His79 (proton acceptor) is an active-site residue. Tyr124, Asn126, and Asn172 together coordinate tRNA.

Belongs to the PTH family. CRS2 subfamily. In terms of assembly, interacts with CAF1 and CAF2. Part of large ribonucleo-protein complexes that include group IIB introns and either CAF1 or CAF2.

The protein resides in the plastid. The protein localises to the chloroplast stroma. Its function is as follows. Required for the splicing of group IIB introns in chloroplasts. Forms complexes with either CAF1 or CAF2 which, in turn, interact with RNA and confer intron specificity of the splicing particles. Has no peptidyl-tRNA hydrolase activity. The chain is Chloroplastic group IIB intron splicing facilitator CRS2, chloroplastic (CRS2) from Zea mays (Maize).